Reading from the N-terminus, the 312-residue chain is Ornithine carbamoyltransferase, catabolic (312 aa).

Residues 57-60 (STRT), glutamine 84, arginine 108, and 135-138 (HPTQ) each bind carbamoyl phosphate. L-ornithine-binding positions include asparagine 167, aspartate 231, and 235-236 (SM). 272-273 (CL) is a binding site for carbamoyl phosphate.

The protein belongs to the aspartate/ornithine carbamoyltransferase superfamily. OTCase family.

Its subcellular location is the cytoplasm. It catalyses the reaction carbamoyl phosphate + L-ornithine = L-citrulline + phosphate + H(+). The protein operates within amino-acid degradation; L-arginine degradation via ADI pathway; carbamoyl phosphate from L-arginine: step 2/2. In terms of biological role, reversibly catalyzes the transfer of the carbamoyl group from carbamoyl phosphate (CP) to the N(epsilon) atom of ornithine (ORN) to produce L-citrulline. This chain is Ornithine carbamoyltransferase, catabolic (arcB), found in Mycoplasma capricolum subsp. capripneumoniae.